Here is a 40-residue protein sequence, read N- to C-terminus: Large ribosomal subunit protein bL36 (40 aa).

Belongs to the bacterial ribosomal protein bL36 family.

In Corynebacterium glutamicum (strain R), this protein is Large ribosomal subunit protein bL36.